The chain runs to 322 residues: RNA pseudouridine synthase 1 (322 aa).

Aspartate 120 is an active-site residue.

The protein belongs to the pseudouridine synthase RluA family.

It carries out the reaction a uridine in RNA = a pseudouridine in RNA. The sequence is that of RNA pseudouridine synthase 1 from Arabidopsis thaliana (Mouse-ear cress).